The primary structure comprises 298 residues: Inosose dehydratase (298 aa).

Belongs to the IolE/MocC family. It depends on glutathione as a cofactor. Requires Co(2+) as cofactor. The cofactor is Mn(2+).

It catalyses the reaction scyllo-inosose = 3D-3,5/4-trihydroxycyclohexane-1,2-dione + H2O. Its function is as follows. Catalyzes the dehydration of inosose (2-keto-myo-inositol, 2KMI or 2,4,6/3,5-pentahydroxycyclohexanone) to 3D-(3,5/4)-trihydroxycyclohexane-1,2-dione (D-2,3-diketo-4-deoxy-epi-inositol). The sequence is that of Inosose dehydratase from Serratia proteamaculans (strain 568).